We begin with the raw amino-acid sequence, 140 residues long: Ribosome maturation factor RimP (140 aa).

The protein belongs to the RimP family.

It localises to the cytoplasm. In terms of biological role, required for maturation of 30S ribosomal subunits. This is Ribosome maturation factor RimP from Campylobacter jejuni subsp. doylei (strain ATCC BAA-1458 / RM4099 / 269.97).